The sequence spans 631 residues: MSTTTLTRREQRAKAQHFIDTLEGTAFPNSKRIYVTGSQHDIRVPMREIQLSPTLIGGSKDNPQFEENEAVPVYDTSGPYGDPEVAINVQQGLAKLRQPWIDARNDSEELDDRSSAYTRERLADDGLDDLRFTGLLTPKRAKAGKRVTQLHYARQGIVTPEMEFIAIRENMGRERIRSEVLRHQHPGMNFGARLPENITPEFVRDEVAAGRAIIPANINHPESEPMIIGRNFLVKVNANIGNSAVTSSIEEEVEKLVWSTRWGADTVMDLSTGRYIHETREWILRNSPVPIGTVPIYQALEKVNGIAEDLTWEAFRDTLLEQAEQGVDYFTIHAGVLLRYVPMTAKRLTGIVSRGGSIMAKWCLSHHKENFLFEHFREICEICAAYDVSLSLGDGLRPGSIQDANDEAQFSELHTLGELTKIAWEYDVQVMIEGPGHVPMHMIQRNMTEELESCHEAPFYTLGPLTTDIAPGYDHFTSGIGAAMIGWFGCAMLCYVTPKEHLGLPNKEDVKQGLITYKIAAHAADLAKGHPGAQIRDNAMSKARFEFRWEDQFNLALDPFTARAYHDETLPQESGKVAHFCSMCGPKFCSMKISQEVRDYAAAQAIEVGMADMSENFRAKGGEIYLKREEA.

Substrate-binding positions include Asn-239, Met-268, Tyr-297, His-333, 353 to 355 (SRG), 394 to 397 (DGLR), and Glu-433. Residue His-437 participates in Zn(2+) binding. Tyr-460 contributes to the substrate binding site. His-501 lines the Zn(2+) pocket. Residues Cys-581, Cys-584, and Cys-589 each contribute to the [4Fe-4S] cluster site.

This sequence belongs to the ThiC family. As to quaternary structure, homodimer. [4Fe-4S] cluster is required as a cofactor.

The catalysed reaction is 5-amino-1-(5-phospho-beta-D-ribosyl)imidazole + S-adenosyl-L-methionine = 4-amino-2-methyl-5-(phosphooxymethyl)pyrimidine + CO + 5'-deoxyadenosine + formate + L-methionine + 3 H(+). Its pathway is cofactor biosynthesis; thiamine diphosphate biosynthesis. Functionally, catalyzes the synthesis of the hydroxymethylpyrimidine phosphate (HMP-P) moiety of thiamine from aminoimidazole ribotide (AIR) in a radical S-adenosyl-L-methionine (SAM)-dependent reaction. The polypeptide is Phosphomethylpyrimidine synthase (Salmonella paratyphi B (strain ATCC BAA-1250 / SPB7)).